A 394-amino-acid polypeptide reads, in one-letter code: MAAETFLFTSESVNEGHPDKLCDQVSDAVLDACLAQDPDSKVACETCTKTNMVMVFGEITTKATVDYEKIVRDTCRDIGFISDDVGLDADHCKVLVNIEQQSPDIAQGVHGHFTKRPEEVGAGDQGIMFGYATDETPELMPLTHMLATKLGARLTEVRKNGTCAWLRPDGKTQVTIEYLNEGGAMVPVRVHTVLISTQHDETVTNDEIAADLKEHVIKPVIPGKYLDENTIFHLNPSGRFVIGGPHGDAGLTARKIIIDTYGGWGAHGGGAFSGKDPTKVDRSGAYIARQAAKSIIASGLARRCIVQISYAIGVPEPLSVFVDSYGTGKIPDREILKLVKENFDFRPGMITINLDLKKGGNRFIKTAAYGHFGRDDADFTWEVVKPLKFDKASA.

E11 contacts Mg(2+). H17 is an ATP binding site. E45 is a K(+) binding site. 2 residues coordinate L-methionine: E58 and Q101. Residues 169 to 171, 237 to 240, D248, 254 to 255, A271, K275, and K279 each bind ATP; these read DGK, SGRF, and RK. D248 serves as a coordination point for L-methionine. K279 contributes to the L-methionine binding site.

It belongs to the AdoMet synthase family. In terms of assembly, homotetramer. It depends on Mn(2+) as a cofactor. Mg(2+) serves as cofactor. Co(2+) is required as a cofactor. Requires K(+) as cofactor.

It localises to the cytoplasm. The catalysed reaction is L-methionine + ATP + H2O = S-adenosyl-L-methionine + phosphate + diphosphate. It participates in amino-acid biosynthesis; S-adenosyl-L-methionine biosynthesis; S-adenosyl-L-methionine from L-methionine: step 1/1. Its function is as follows. Catalyzes the formation of S-adenosylmethionine from methionine and ATP. The reaction comprises two steps that are both catalyzed by the same enzyme: formation of S-adenosylmethionine (AdoMet) and triphosphate, and subsequent hydrolysis of the triphosphate. The chain is S-adenosylmethionine synthase 1 (SAM1) from Hordeum vulgare (Barley).